The primary structure comprises 441 residues: uncharacterized protein (441 aa).

Transmembrane regions (helical) follow at residues 21 to 41 (VVVA…MSLG), 51 to 71 (LGGG…AVAI), 94 to 114 (AAST…VTMS), 118 to 138 (VIPV…GVFA), 150 to 170 (VLTF…GGIF), 195 to 215 (AMLL…FVSY), 239 to 259 (QHIL…LYTG), 260 to 280 (SMII…VIAW), 291 to 311 (VHMM…AAVM), 334 to 354 (LAAL…GSSF), 363 to 383 (IYVP…ALVG), and 419 to 439 (VVPT…IAAM).

It localises to the cell membrane. This is an uncharacterized protein from Vibrio parahaemolyticus serotype O3:K6 (strain RIMD 2210633).